We begin with the raw amino-acid sequence, 403 residues long: uncharacterized protein (403 aa).

The region spanning 3 to 126 (QVKIGQFKFG…EVIPQVLCTG (124 aa)) is the Bro-N domain.

This is an uncharacterized protein from Lepidoptera (butterflies and moths).